The sequence spans 119 residues: Protein phosphatase EYA3 (119 aa).

Belongs to the HAD-like hydrolase superfamily. EYA family. It depends on Mg(2+) as a cofactor.

It is found in the cytoplasm. The protein resides in the nucleus. It catalyses the reaction O-phospho-L-tyrosyl-[protein] + H2O = L-tyrosyl-[protein] + phosphate. In terms of biological role, tyrosine phosphatase that specifically dephosphorylates 'Tyr-142' of histone H2AX (H2AXY142ph). 'Tyr-142' phosphorylation of histone H2AX plays a central role in DNA repair and acts as a mark that distinguishes between apoptotic and repair responses to genotoxic stress. Promotes efficient DNA repair by dephosphorylating H2AX, promoting the recruitment of DNA repair complexes containing MDC1. Its function as histone phosphatase probably explains its role in transcription regulation during organogenesis. May be involved in development of the eye. The chain is Protein phosphatase EYA3 (EYA3) from Gallus gallus (Chicken).